A 510-amino-acid chain; its full sequence is MADTYVGAIDQGTTGTRFMVFDHSGQVVANAYEKHEQIYPEPGWVEHDPVEIWENTQEVVTKGLADAGVGAEQLEALGITNQRETTIVWDKETGKPVHNALVWQDRRTTDRVEEIQEEDKVEWIRGKTGLECDAYFSATKTEWILDNAEPLKMQSSRGADLRERAEDGELLMGTIDAWLIYKLTGNHITDVSNASRTMLYNIHDMEWDDELLEEFGVPESMVPEVRPSSDESLYGHTDADGFLKEEVPVAGALGDQQAALFGQTCFDKGDAKNTYGTGAFYLMNTGSEAVASDNGLLTTVGFQMSGEPVQYALEGSIFIAGAAIEWLEDVDLINNAAQTAELARSVESTDGVYMVPAFTGLGAPHWDGRARGTIVGMTRGTRKEHIVRATLESIAYQTRDLAEAMEEDSGVEMTTLRVDGGAVKNNFLCQLQSDIIQTDIARPQVDETTALGSAYAAGLAVGYWDTVDELRDNWQVDEEFSPEMDAGKADKMYARWDDAVDRSRDWAQEE.

ADP is bound at residue threonine 13. ATP contacts are provided by threonine 13 and threonine 14. Threonine 13 contacts sn-glycerol 3-phosphate. Arginine 17 is a binding site for ADP. Arginine 83, glutamate 84, tyrosine 135, and aspartate 255 together coordinate sn-glycerol 3-phosphate. Arginine 83, glutamate 84, tyrosine 135, aspartate 255, and glutamine 256 together coordinate glycerol. 4 residues coordinate ADP: threonine 277, glycine 321, glycine 421, and asparagine 425. Residues threonine 277, glycine 321, and glycine 421 each coordinate ATP.

It belongs to the FGGY kinase family.

It carries out the reaction glycerol + ATP = sn-glycerol 3-phosphate + ADP + H(+). Its pathway is polyol metabolism; glycerol degradation via glycerol kinase pathway; sn-glycerol 3-phosphate from glycerol: step 1/1. Functionally, key enzyme in the regulation of glycerol uptake and metabolism. Catalyzes the phosphorylation of glycerol to yield sn-glycerol 3-phosphate. The chain is Glycerol kinase from Haloarcula marismortui (strain ATCC 43049 / DSM 3752 / JCM 8966 / VKM B-1809) (Halobacterium marismortui).